Consider the following 144-residue polypeptide: Putative pre-16S rRNA nuclease (144 aa).

This sequence belongs to the YqgF nuclease family.

The protein resides in the cytoplasm. In terms of biological role, could be a nuclease involved in processing of the 5'-end of pre-16S rRNA. The sequence is that of Putative pre-16S rRNA nuclease from Blochmanniella pennsylvanica (strain BPEN).